A 274-amino-acid chain; its full sequence is Thymidylate synthase (274 aa).

Residue Arg21 participates in dUMP binding. Residue His51 coordinates (6R)-5,10-methylene-5,6,7,8-tetrahydrofolate. 123–124 (RR) is a binding site for dUMP. The active-site Nucleophile is the Cys156. DUMP-binding positions include 176-179 (RSAD), Asn187, and 217-219 (HIY). Asp179 lines the (6R)-5,10-methylene-5,6,7,8-tetrahydrofolate pocket. Residue Ser273 coordinates (6R)-5,10-methylene-5,6,7,8-tetrahydrofolate.

It belongs to the thymidylate synthase family. Bacterial-type ThyA subfamily. In terms of assembly, homodimer.

The protein localises to the cytoplasm. It carries out the reaction dUMP + (6R)-5,10-methylene-5,6,7,8-tetrahydrofolate = 7,8-dihydrofolate + dTMP. It functions in the pathway pyrimidine metabolism; dTTP biosynthesis. Its function is as follows. Catalyzes the reductive methylation of 2'-deoxyuridine-5'-monophosphate (dUMP) to 2'-deoxythymidine-5'-monophosphate (dTMP) while utilizing 5,10-methylenetetrahydrofolate (mTHF) as the methyl donor and reductant in the reaction, yielding dihydrofolate (DHF) as a by-product. This enzymatic reaction provides an intracellular de novo source of dTMP, an essential precursor for DNA biosynthesis. The polypeptide is Thymidylate synthase (Francisella philomiragia subsp. philomiragia (strain ATCC 25017 / CCUG 19701 / FSC 153 / O#319-036)).